Reading from the N-terminus, the 311-residue chain is tRNA (cytosine(49)-C(5))-methyltransferase (311 aa).

S-adenosyl-L-methionine-binding positions include 118–124, Asp-142, Asp-169, and Asp-186; that span reads AAAPGSK. Catalysis depends on Cys-239, which acts as the Nucleophile.

It belongs to the class I-like SAM-binding methyltransferase superfamily. RsmB/NOP family. In terms of assembly, forms a tripartite complex with archease and tRNA. Binds only the oligomeric forms of the archease.

Its subcellular location is the cytoplasm. The catalysed reaction is cytidine(49) in tRNA precursor + S-adenosyl-L-methionine = 5-methylcytidine(49) in tRNA precursor + S-adenosyl-L-homocysteine + H(+). Its activity is regulated as follows. Substrate specificity and tendency to aggregate are influenced by archease. Catalyzes AdoMet-dependent formation of m5C in tRNA. In the presence of protein archease, specifically methylates the cytosine at position 49 (m5C49) of tRNA. In the absence of archease, catalyzes the formation of m5C at many locations in tRNAs or rRNAs. This Pyrococcus abyssi (strain GE5 / Orsay) protein is tRNA (cytosine(49)-C(5))-methyltransferase.